A 312-amino-acid polypeptide reads, in one-letter code: DNA-directed RNA polymerase subunit alpha (312 aa).

The tract at residues 1–227 (MNNFYIKCLK…SFFSSLLENK (227 aa)) is alpha N-terminal domain (alpha-NTD). The interval 243–312 (PKNPHTNIAI…KNKLGIVLSN (70 aa)) is alpha C-terminal domain (alpha-CTD).

This sequence belongs to the RNA polymerase alpha chain family. In plastids the minimal PEP RNA polymerase catalytic core is composed of four subunits: alpha, beta, beta', and beta''. When a (nuclear-encoded) sigma factor is associated with the core the holoenzyme is formed, which can initiate transcription.

The protein localises to the plastid. It localises to the chloroplast. The enzyme catalyses RNA(n) + a ribonucleoside 5'-triphosphate = RNA(n+1) + diphosphate. Its function is as follows. DNA-dependent RNA polymerase catalyzes the transcription of DNA into RNA using the four ribonucleoside triphosphates as substrates. This chain is DNA-directed RNA polymerase subunit alpha, found in Trieres chinensis (Marine centric diatom).